A 121-amino-acid chain; its full sequence is Small ribosomal subunit protein uS13 (121 aa).

Residues 91 to 121 form a disordered region; it reads HRMSLPVRGQRTRTNARTRRGSRKTVAGRKK. A compositionally biased stretch (basic residues) spans 100 to 121; it reads QRTRTNARTRRGSRKTVAGRKK.

Belongs to the universal ribosomal protein uS13 family. As to quaternary structure, part of the 30S ribosomal subunit. Forms a loose heterodimer with protein S19. Forms two bridges to the 50S subunit in the 70S ribosome.

Its function is as follows. Located at the top of the head of the 30S subunit, it contacts several helices of the 16S rRNA. In the 70S ribosome it contacts the 23S rRNA (bridge B1a) and protein L5 of the 50S subunit (bridge B1b), connecting the 2 subunits; these bridges are implicated in subunit movement. Contacts the tRNAs in the A and P-sites. This Prochlorococcus marinus (strain MIT 9312) protein is Small ribosomal subunit protein uS13.